We begin with the raw amino-acid sequence, 325 residues long: Pyruvate dehydrogenase E1 component subunit beta (325 aa).

Glu60 lines the thiamine diphosphate pocket.

Heterodimer of an alpha and a beta chain. Thiamine diphosphate is required as a cofactor.

The enzyme catalyses N(6)-[(R)-lipoyl]-L-lysyl-[protein] + pyruvate + H(+) = N(6)-[(R)-S(8)-acetyldihydrolipoyl]-L-lysyl-[protein] + CO2. The pyruvate dehydrogenase complex catalyzes the overall conversion of pyruvate to acetyl-CoA and CO(2). It contains multiple copies of three enzymatic components: pyruvate dehydrogenase (E1), dihydrolipoamide acetyltransferase (E2) and lipoamide dehydrogenase (E3). The polypeptide is Pyruvate dehydrogenase E1 component subunit beta (pdhB) (Staphylococcus aureus (strain COL)).